The primary structure comprises 255 residues: NAD kinase (255 aa).

The active-site Proton acceptor is D44. Residues 44-45 (DG), H49, 114-115 (NE), D144, A152, 155-160 (SAYNLS), and Q216 each bind NAD(+).

Belongs to the NAD kinase family. It depends on a divalent metal cation as a cofactor.

It is found in the cytoplasm. The enzyme catalyses NAD(+) + ATP = ADP + NADP(+) + H(+). Involved in the regulation of the intracellular balance of NAD and NADP, and is a key enzyme in the biosynthesis of NADP. Catalyzes specifically the phosphorylation on 2'-hydroxyl of the adenosine moiety of NAD to yield NADP. This chain is NAD kinase, found in Rickettsia prowazekii (strain Madrid E).